We begin with the raw amino-acid sequence, 152 residues long: Large-conductance mechanosensitive channel (152 aa).

Helical transmembrane passes span 26 to 46 (VLDL…VGSA), 50 to 70 (ILTP…LFIT), and 92 to 112 (IGVF…IFWL).

It belongs to the MscL family. In terms of assembly, homopentamer.

It is found in the cell inner membrane. In terms of biological role, channel that opens in response to stretch forces in the membrane lipid bilayer. May participate in the regulation of osmotic pressure changes within the cell. This chain is Large-conductance mechanosensitive channel, found in Gluconobacter oxydans (strain 621H) (Gluconobacter suboxydans).